Reading from the N-terminus, the 343-residue chain is Cytoplasmic tRNA 2-thiolation protein 1 (343 aa).

This sequence belongs to the TtcA family. CTU1/NCS6/ATPBD3 subfamily.

The protein resides in the cytoplasm. It functions in the pathway tRNA modification; 5-methoxycarbonylmethyl-2-thiouridine-tRNA biosynthesis. Functionally, plays a central role in 2-thiolation of mcm(5)S(2)U at tRNA wobble positions of tRNA(Lys), tRNA(Glu) and tRNA(Gln). Directly binds tRNAs and probably acts by catalyzing adenylation of tRNAs, an intermediate required for 2-thiolation. It is unclear whether it acts as a sulfurtransferase that transfers sulfur from thiocarboxylated URM1 onto the uridine of tRNAs at wobble position. The chain is Cytoplasmic tRNA 2-thiolation protein 1 from Drosophila mojavensis (Fruit fly).